Here is a 389-residue protein sequence, read N- to C-terminus: MESRCYGCAVKFTLFKKEYGCKNCGRAFCNGCLSFSALVPRAGNTQQKVCKQCHTILTRGSSDNASKWSPPQNYKKRVAALEAKKKSSTSHSQSLTHKDQAIAERLARLRQENKPKSVPSQAEIEARLAALKDEVQGPIPSTQEMEDRLAALQGRVPPSHTVRPAHQAPDTRTQAQQTQDLLTQLTAEVAIDENCQPRASASLQNDLNKGAARSQRTNSQGQASQSLEEEKYKLLAEAAVELQEENTRQERILALAKRLAVLKGQDPSRVTLQDYHLPDSDEDEETAIQRVMQQLTEEAALDEASGFNIPEKPAPGSRAQPCKAEMEGPQAEEEELPWCCICNEDATLRCAGCDGDLYCARCFREGHDNFDLKEHQTSPYHPRRPCQEH.

The FYVE-type zinc-finger motif lies at 1 to 58 (MESRCYGCAVKFTLFKKEYGCKNCGRAFCNGCLSFSALVPRAGNTQQKVCKQCHTILT). Zn(2+)-binding residues include C5, C8, C21, C24, C29, C32, C50, and C53. S69 bears the Phosphoserine mark. The short motif at 99 to 112 (DQAIAERLARLRQE) is the MIM1-A element. A Glycyl lysine isopeptide (Lys-Gly) (interchain with G-Cter in SUMO2) cross-link involves residue K132. Disordered stretches follow at residues 158–177 (PSHT…QAQQ) and 204–227 (QNDL…SQSL). Residues 167–177 (QAPDTRTQAQQ) are compositionally biased toward low complexity. A compositionally biased stretch (polar residues) spans 214 to 226 (SQRTNSQGQASQS). Phosphoserine is present on S219. A coiled-coil region spans residues 226–261 (SLEEEKYKLLAEAAVELQEENTRQERILALAKRLAV). Positions 252-265 (ILALAKRLAVLKGQ) match the MIM1-B motif. S280 carries the post-translational modification Phosphoserine.

Interacts (via MIM1-B) with VPS4A; interaction takes place at the midbody ring following cytokinesis checkpoint activation.

The protein localises to the cytoplasm. Its subcellular location is the cytoskeleton. The protein resides in the microtubule organizing center. It localises to the centrosome. It is found in the cleavage furrow. The protein localises to the midbody. Its subcellular location is the midbody ring. Functionally, key regulator of abscission step in cytokinesis: part of the cytokinesis checkpoint, a process required to delay abscission to prevent both premature resolution of intercellular chromosome bridges and accumulation of DNA damage. Together with CHMP4C, required to retain abscission-competent VPS4 (VPS4A and/or VPS4B) at the midbody ring until abscission checkpoint signaling is terminated at late cytokinesis. Deactivation of AURKB results in dephosphorylation of CHMP4C followed by its dissociation from ZFYVE19/ANCHR and VPS4 and subsequent abscission. In Mus musculus (Mouse), this protein is Abscission/NoCut checkpoint regulator (Zfyve19).